We begin with the raw amino-acid sequence, 223 residues long: Ribose-5-phosphate isomerase A (223 aa).

Residues 29 to 32 (TGST), 82 to 85 (DGAD), and 95 to 98 (KGGG) contribute to the substrate site. Residue Glu-104 is the Proton acceptor of the active site. Substrate is bound at residue Lys-122.

Belongs to the ribose 5-phosphate isomerase family. In terms of assembly, homodimer.

It catalyses the reaction aldehydo-D-ribose 5-phosphate = D-ribulose 5-phosphate. Its pathway is carbohydrate degradation; pentose phosphate pathway; D-ribose 5-phosphate from D-ribulose 5-phosphate (non-oxidative stage): step 1/1. Catalyzes the reversible conversion of ribose-5-phosphate to ribulose 5-phosphate. The chain is Ribose-5-phosphate isomerase A from Neisseria meningitidis serogroup C / serotype 2a (strain ATCC 700532 / DSM 15464 / FAM18).